The sequence spans 785 residues: Cullin-3 (785 aa).

The 63-residue stretch at 715 to 777 (SRKHQADACI…REYLQRQADN (63 aa)) folds into the Cullin neddylation domain. Lys729 participates in a covalent cross-link: Glycyl lysine isopeptide (Lys-Gly) (interchain with G-Cter in NEDD8).

Belongs to the cullin family. In terms of assembly, probable component of multiple cullin-RING-based BC3B (BTB-CUL3-BTB) E3 ubiquitin-protein ligase complexes formed by cul-3, rbx-1 and a variable BTB domain-containing protein as adapter and substrate recognition component. Interacts with btb1, btb2, btb3, nedd8 and pip1. Neddylated; enhancing the ubiquitin-ligase activity.

It localises to the cytoplasm. Its pathway is protein modification; protein ubiquitination. In terms of biological role, probable core component of multiple cullin-RING-based BC3B (BTB-CUL3-BTB) E3 ubiquitin-protein ligase complexes which mediate the ubiquitination and subsequent proteasomal degradation of target proteins. As a scaffold protein may contribute to catalysis through positioning of the substrate and the ubiquitin-conjugating enzyme. The functional specificity of the BC3B complex depends on the substrate recognition component. Involved in ubiquitin-mediated degradation of btb3. This chain is Cullin-3 (cul3), found in Schizosaccharomyces pombe (strain 972 / ATCC 24843) (Fission yeast).